The chain runs to 311 residues: tRNA (cytosine(49)-C(5))-methyltransferase (311 aa).

Residues 118 to 124, Asp-142, Asp-169, and Asp-186 each bind S-adenosyl-L-methionine; that span reads AAAPGSK. Residue Cys-239 is the Nucleophile of the active site.

The protein belongs to the class I-like SAM-binding methyltransferase superfamily. RsmB/NOP family. In terms of assembly, forms a tripartite complex with archease and tRNA. Binds only the oligomeric forms of the archease.

The protein localises to the cytoplasm. It carries out the reaction cytidine(49) in tRNA precursor + S-adenosyl-L-methionine = 5-methylcytidine(49) in tRNA precursor + S-adenosyl-L-homocysteine + H(+). Its activity is regulated as follows. Substrate specificity and tendency to aggregate are influenced by archease. In terms of biological role, catalyzes AdoMet-dependent formation of m5C in tRNA. In the presence of protein archease, specifically methylates the cytosine at position 49 (m5C49) of tRNA. In the absence of archease, catalyzes the formation of m5C at many locations in tRNAs or rRNAs. This Pyrococcus abyssi (strain GE5 / Orsay) protein is tRNA (cytosine(49)-C(5))-methyltransferase.